The primary structure comprises 276 residues: NH(3)-dependent NAD(+) synthetase (276 aa).

43–50 is an ATP binding site; it reads GISGGVDS. Aspartate 49 serves as a coordination point for Mg(2+). Arginine 146 serves as a coordination point for deamido-NAD(+). ATP is bound at residue threonine 166. Residue glutamate 171 coordinates Mg(2+). Deamido-NAD(+) is bound by residues lysine 179 and aspartate 186. ATP contacts are provided by lysine 195 and threonine 217. 266–267 lines the deamido-NAD(+) pocket; the sequence is HK.

Belongs to the NAD synthetase family. As to quaternary structure, homodimer.

It carries out the reaction deamido-NAD(+) + NH4(+) + ATP = AMP + diphosphate + NAD(+) + H(+). The protein operates within cofactor biosynthesis; NAD(+) biosynthesis; NAD(+) from deamido-NAD(+) (ammonia route): step 1/1. Functionally, catalyzes the ATP-dependent amidation of deamido-NAD to form NAD. Uses ammonia as a nitrogen source. The chain is NH(3)-dependent NAD(+) synthetase from Shewanella putrefaciens (strain CN-32 / ATCC BAA-453).